Consider the following 486-residue polypeptide: UDP-N-acetylmuramate--L-alanine ligase (486 aa).

Residue 129–135 (GTHGKTT) coordinates ATP.

This sequence belongs to the MurCDEF family.

The protein localises to the cytoplasm. It catalyses the reaction UDP-N-acetyl-alpha-D-muramate + L-alanine + ATP = UDP-N-acetyl-alpha-D-muramoyl-L-alanine + ADP + phosphate + H(+). The protein operates within cell wall biogenesis; peptidoglycan biosynthesis. Its function is as follows. Cell wall formation. This is UDP-N-acetylmuramate--L-alanine ligase from Vibrio cholerae serotype O1 (strain ATCC 39541 / Classical Ogawa 395 / O395).